Consider the following 129-residue polypeptide: Large ribosomal subunit protein bL12c (129 aa).

Positions Lys101–Gly123 are enriched in basic and acidic residues. Residues Lys101 to Lys129 form a disordered region.

It belongs to the bacterial ribosomal protein bL12 family. Homodimer. Part of the ribosomal stalk of the 50S ribosomal subunit. Forms a multimeric L10(L12)X complex, where L10 forms an elongated spine to which 2 to 4 L12 dimers bind in a sequential fashion. Binds GTP-bound translation factors.

The protein localises to the plastid. Its subcellular location is the chloroplast. In terms of biological role, forms part of the ribosomal stalk which helps the ribosome interact with GTP-bound translation factors. Is thus essential for accurate translation. This Guillardia theta (Cryptophyte) protein is Large ribosomal subunit protein bL12c.